Reading from the N-terminus, the 518-residue chain is Arrestin-related trafficking adapter 10 (518 aa).

Lys-118 is covalently cross-linked (Glycyl lysine isopeptide (Lys-Gly) (interchain with G-Cter in ubiquitin)).

Belongs to the ART10 family. Interacts with RSP5. Ubiquitinated by RSP5.

It is found in the cytoplasm. In terms of biological role, may regulate endocytosis by recruiting RSP5 ubiquitin ligase activity to specific plasma membrane proteins in response to extracellular stimuli. This is Arrestin-related trafficking adapter 10 (ART10) from Saccharomyces cerevisiae (strain RM11-1a) (Baker's yeast).